A 1091-amino-acid polypeptide reads, in one-letter code: Constitutive coactivator of PPAR-gamma-like protein 2 (1091 aa).

Residues Gln-35–Pro-53 are compositionally biased toward low complexity. 4 disordered regions span residues Gln-35–Pro-105, Asn-503–His-575, Ser-966–Ser-1010, and Val-1037–Val-1077. Omega-N-methylarginine is present on Arg-57. Residues Ser-82 to Gly-95 are compositionally biased toward basic residues. Over residues Gly-532–Pro-544 the composition is skewed to polar residues. Over residues Ser-966–Gly-976 the composition is skewed to low complexity. Arg-972 carries the omega-N-methylarginine modification. Basic and acidic residues predominate over residues Ser-1062 to Val-1077.

The protein belongs to the constitutive coactivator of PPAR-gamma family.

The polypeptide is Constitutive coactivator of PPAR-gamma-like protein 2 (Fam120c) (Mus musculus (Mouse)).